Consider the following 139-residue polypeptide: ATP synthase epsilon chain (139 aa).

Belongs to the ATPase epsilon chain family. F-type ATPases have 2 components, CF(1) - the catalytic core - and CF(0) - the membrane proton channel. CF(1) has five subunits: alpha(3), beta(3), gamma(1), delta(1), epsilon(1). CF(0) has three main subunits: a, b and c.

The protein localises to the cell membrane. In terms of biological role, produces ATP from ADP in the presence of a proton gradient across the membrane. The polypeptide is ATP synthase epsilon chain (Symbiobacterium thermophilum (strain DSM 24528 / JCM 14929 / IAM 14863 / T)).